Consider the following 611-residue polypeptide: Phosphatidylinositol 3,4,5-trisphosphate 3-phosphatase and protein-tyrosine-phosphatase PTEN2A (611 aa).

Disordered stretches follow at residues Met1–Ser42 and Gly87–Thr109. Ser91 carries the phosphoserine modification. Residues Thr100–Thr109 show a composition bias toward low complexity. Positions Arg145 to Phe324 constitute a Phosphatase tensin-type domain. Cys263 (phosphocysteine intermediate) is an active-site residue. The region spanning Gly331–Ile458 is the C2 tensin-type domain. Residues Ile462–Val486 show a composition bias toward polar residues. The disordered stretch occupies residues Ile462–Glu589. A compositionally biased stretch (basic and acidic residues) spans Pro495–Val507. Position 509 is a phosphoserine (Ser509). 2 stretches are compositionally biased toward polar residues: residues Asp514–Pro530 and Val549–Thr565.

The protein belongs to the PTEN phosphatase protein family. As to expression, expressed in seedlings, roots, stems, leaves, flowers and siliques. However, at protein level, not observed in older leaves and mature siliques.

The catalysed reaction is O-phospho-L-tyrosyl-[protein] + H2O = L-tyrosyl-[protein] + phosphate. The enzyme catalyses a 1,2-diacyl-sn-glycero-3-phospho-(1D-myo-inositol-3,4,5-trisphosphate) + H2O = a 1,2-diacyl-sn-glycero-3-phospho-(1D-myo-inositol-4,5-bisphosphate) + phosphate. Functionally, binds phosphatidic acid. Protein tyrosine phosphatase that also exhibits lipid phosphatase activity. Hydrolyzed poorly p-nitrophenyl phosphate (p-NPP). Can use PtdIns isomers as substrates. Removes efficiently phosphate from the D3 position of the inositol ring, less from the D4 position and not at all from the D5 position on monophosphorylated PtdIns isomers (PIPs). The presence of a phosphate group in the D5 position on PIP(2) isomers reduces lipid phosphatase activity. Mostly active on PtdIns(3)P and PtdIns(3,4)P(2), to a lower extent, on PtdIns(4)P and PtdIns(3,5)P(2), but barely against PtdIns(3,4,5)P(3) as substrate. In Arabidopsis thaliana (Mouse-ear cress), this protein is Phosphatidylinositol 3,4,5-trisphosphate 3-phosphatase and protein-tyrosine-phosphatase PTEN2A.